A 206-amino-acid chain; its full sequence is Fibroblast growth factor 4 (206 aa).

The first 30 residues, 1–30 (MSGPGTAAVALLPAVLLALLAPWAGRGGAA), serve as a signal peptide directing secretion.

This sequence belongs to the heparin-binding growth factors family. In terms of assembly, interacts with FGFR1, FGFR2, FGFR3 and FGFR4. Affinity between fibroblast growth factors (FGFs) and their receptors is increased by heparan sulfate glycosaminoglycans that function as coreceptors.

The protein localises to the secreted. Functionally, plays an important role in the regulation of embryonic development, cell proliferation, and cell differentiation. Required for normal limb and cardiac valve development during embryogenesis. May play a role in embryonic molar tooth bud development via inducing the expression of MSX1, MSX2 and MSX1-mediated expression of SDC1 in dental mesenchyme cells. The sequence is that of Fibroblast growth factor 4 from Homo sapiens (Human).